The sequence spans 96 residues: Putative pterin-4-alpha-carbinolamine dehydratase (96 aa).

This sequence belongs to the pterin-4-alpha-carbinolamine dehydratase family.

It catalyses the reaction (4aS,6R)-4a-hydroxy-L-erythro-5,6,7,8-tetrahydrobiopterin = (6R)-L-erythro-6,7-dihydrobiopterin + H2O. In Prochlorococcus marinus (strain MIT 9215), this protein is Putative pterin-4-alpha-carbinolamine dehydratase.